We begin with the raw amino-acid sequence, 542 residues long: GMP synthase [glutamine-hydrolyzing] (542 aa).

The Glutamine amidotransferase type-1 domain maps to methionine 28–threonine 218. Cysteine 105 serves as the catalytic Nucleophile. Catalysis depends on residues histidine 192 and glutamate 194. The GMPS ATP-PPase domain maps to tryptophan 219–arginine 417. Serine 246–serine 252 provides a ligand contact to ATP.

Homodimer.

The enzyme catalyses XMP + L-glutamine + ATP + H2O = GMP + L-glutamate + AMP + diphosphate + 2 H(+). It participates in purine metabolism; GMP biosynthesis; GMP from XMP (L-Gln route): step 1/1. Catalyzes the synthesis of GMP from XMP. The protein is GMP synthase [glutamine-hydrolyzing] of Gloeothece citriformis (strain PCC 7424) (Cyanothece sp. (strain PCC 7424)).